The chain runs to 321 residues: Lipoyl synthase (321 aa).

[4Fe-4S] cluster contacts are provided by Cys68, Cys73, Cys79, Cys94, Cys98, Cys101, and Ser308. Residues 80–297 form the Radical SAM core domain; that stretch reads FNHGTATFMI…KEEAMAMGFT (218 aa).

This sequence belongs to the radical SAM superfamily. Lipoyl synthase family. It depends on [4Fe-4S] cluster as a cofactor.

The protein resides in the cytoplasm. It catalyses the reaction [[Fe-S] cluster scaffold protein carrying a second [4Fe-4S](2+) cluster] + N(6)-octanoyl-L-lysyl-[protein] + 2 oxidized [2Fe-2S]-[ferredoxin] + 2 S-adenosyl-L-methionine + 4 H(+) = [[Fe-S] cluster scaffold protein] + N(6)-[(R)-dihydrolipoyl]-L-lysyl-[protein] + 4 Fe(3+) + 2 hydrogen sulfide + 2 5'-deoxyadenosine + 2 L-methionine + 2 reduced [2Fe-2S]-[ferredoxin]. Its pathway is protein modification; protein lipoylation via endogenous pathway; protein N(6)-(lipoyl)lysine from octanoyl-[acyl-carrier-protein]: step 2/2. Catalyzes the radical-mediated insertion of two sulfur atoms into the C-6 and C-8 positions of the octanoyl moiety bound to the lipoyl domains of lipoate-dependent enzymes, thereby converting the octanoylated domains into lipoylated derivatives. The protein is Lipoyl synthase of Serratia proteamaculans (strain 568).